The chain runs to 78 residues: Defensin-like protein 74 (78 aa).

The signal sequence occupies residues 1 to 28 (MNYKIGIMSLLVITSIIFLFLVPDKVEA). 4 cysteine pairs are disulfide-bonded: Cys32–Cys73, Cys36–Cys58, Cys42–Cys71, and Cys46–Cys72.

Belongs to the DEFL family.

The protein localises to the secreted. The sequence is that of Defensin-like protein 74 (LCR43) from Arabidopsis thaliana (Mouse-ear cress).